Reading from the N-terminus, the 569-residue chain is uncharacterized protein (569 aa).

Residues 2-22 form a helical membrane-spanning segment; it reads VVIAALLGSLAVLAFLFYLWY.

Its subcellular location is the membrane. This is an uncharacterized protein from Mycoplasma pneumoniae (strain ATCC 29342 / M129 / Subtype 1) (Mycoplasmoides pneumoniae).